The following is a 365-amino-acid chain: D-alanine--D-alanine ligase (365 aa).

In terms of domain architecture, ATP-grasp spans 135 to 345; sequence KLLLKSFNIP…YGSLVDKLIA (211 aa). 168–223 contributes to the ATP binding site; the sequence is KQSLDYPVIVKPAMLGSSIGISIAYNETQIEKCIEEAFAYDLTVVIEKFMRAREIE. Residues aspartate 298, glutamate 312, and asparagine 314 each contribute to the Mg(2+) site.

It belongs to the D-alanine--D-alanine ligase family. It depends on Mg(2+) as a cofactor. Requires Mn(2+) as cofactor.

The protein resides in the cytoplasm. The catalysed reaction is 2 D-alanine + ATP = D-alanyl-D-alanine + ADP + phosphate + H(+). Its pathway is cell wall biogenesis; peptidoglycan biosynthesis. In terms of biological role, cell wall formation. The sequence is that of D-alanine--D-alanine ligase from Borrelia turicatae (strain 91E135).